A 262-amino-acid chain; its full sequence is Thiazole synthase (262 aa).

K104 acts as the Schiff-base intermediate with DXP in catalysis. 1-deoxy-D-xylulose 5-phosphate contacts are provided by residues G165, 191–192, and 213–214; these read AG and NT.

The protein belongs to the ThiG family. In terms of assembly, homotetramer. Forms heterodimers with either ThiH or ThiS.

Its subcellular location is the cytoplasm. It catalyses the reaction [ThiS sulfur-carrier protein]-C-terminal-Gly-aminoethanethioate + 2-iminoacetate + 1-deoxy-D-xylulose 5-phosphate = [ThiS sulfur-carrier protein]-C-terminal Gly-Gly + 2-[(2R,5Z)-2-carboxy-4-methylthiazol-5(2H)-ylidene]ethyl phosphate + 2 H2O + H(+). It functions in the pathway cofactor biosynthesis; thiamine diphosphate biosynthesis. Functionally, catalyzes the rearrangement of 1-deoxy-D-xylulose 5-phosphate (DXP) to produce the thiazole phosphate moiety of thiamine. Sulfur is provided by the thiocarboxylate moiety of the carrier protein ThiS. In vitro, sulfur can be provided by H(2)S. This Nitrosococcus oceani (strain ATCC 19707 / BCRC 17464 / JCM 30415 / NCIMB 11848 / C-107) protein is Thiazole synthase.